A 144-amino-acid chain; its full sequence is UPF0102 protein BPSL3274 (144 aa).

The tract at residues 1-28 is disordered; sequence MCHAREASPGTGEPEAAPRDNFPREAGS. Basic and acidic residues predominate over residues 16–28; the sequence is AAPRDNFPREAGS.

This sequence belongs to the UPF0102 family.

In Burkholderia pseudomallei (strain K96243), this protein is UPF0102 protein BPSL3274.